Reading from the N-terminus, the 273-residue chain is HLA class II histocompatibility antigen, DO beta chain (273 aa).

The N-terminal stretch at 1-26 (MGSGWVPWVVALLVNLTRLDSSMTQG) is a signal peptide. A beta-1 region spans residues 27 to 120 (TDSPEDFVIQ…LGAPFTVGRK (94 aa)). The Extracellular portion of the chain corresponds to 27–224 (TDSPEDFVIQ…RAQSEYSWRK (198 aa)). Disulfide bonds link C41/C105 and C143/C199. N45 is a glycosylation site (N-linked (GlcNAc...) asparagine). Residues 121-214 (VQPEVTVYPE…SLLSPVSVEW (94 aa)) are beta-2. The Ig-like C1-type domain occupies 123-213 (PEVTVYPERT…SSLLSPVSVE (91 aa)). Residues 215 to 224 (RAQSEYSWRK) form a connecting peptide region. The helical transmembrane segment at 225 to 245 (MLSGIAAFLLGLIFLLVGIVI) threads the bilayer. Topologically, residues 246-273 (QLRAQKGYVRTQMSGNEVSRAVLLPQSC) are cytoplasmic.

Belongs to the MHC class II family. In terms of assembly, heterodimer of an alpha chain (DOA) and a beta chain (DOB). Forms a heterotetrameric complex with an HLA-DM molecule during intracellular transport in endosomal/lysosomal compartments in B-cells.

The protein localises to the endosome membrane. It localises to the lysosome membrane. Its function is as follows. Important modulator in the HLA class II restricted antigen presentation pathway by interaction with the HLA-DM molecule in B-cells. Modifies peptide exchange activity of HLA-DM. The sequence is that of HLA class II histocompatibility antigen, DO beta chain (HLA-DOB) from Homo sapiens (Human).